Reading from the N-terminus, the 403-residue chain is tRNA(Met) cytidine acetate ligase (403 aa).

Residues I7 to H20, G102, N168, and R193 contribute to the ATP site.

This sequence belongs to the TmcAL family.

It localises to the cytoplasm. The enzyme catalyses cytidine(34) in elongator tRNA(Met) + acetate + ATP = N(4)-acetylcytidine(34) in elongator tRNA(Met) + AMP + diphosphate. Its function is as follows. Catalyzes the formation of N(4)-acetylcytidine (ac(4)C) at the wobble position of elongator tRNA(Met), using acetate and ATP as substrates. First activates an acetate ion to form acetyladenylate (Ac-AMP) and then transfers the acetyl group to tRNA to form ac(4)C34. This Clostridium tetani (strain Massachusetts / E88) protein is tRNA(Met) cytidine acetate ligase.